Consider the following 498-residue polypeptide: Lycopene beta cyclase, chloroplastic/chromoplastic (498 aa).

The N-terminal 79 residues, 1–79, are a transit peptide targeting the chloroplast and chromoplast; sequence MDTLLRTPNN…ELPMYDPSKG (79 aa). 84–112 contacts NAD(+); sequence LAVVGGGPAGLAVAQQVSEAGLSVCSIDP. The FLEET motif signature appears at 293-297; sequence FLEET.

The protein belongs to the lycopene cyclase family. As to quaternary structure, monomer. It depends on FAD as a cofactor. NADPH is required as a cofactor.

It is found in the plastid. The protein resides in the chloroplast. The protein localises to the chromoplast. It carries out the reaction a carotenoid psi-end group = a carotenoid beta-end derivative. It catalyses the reaction all-trans-lycopene = gamma-carotene. The catalysed reaction is gamma-carotene = all-trans-beta-carotene. The enzyme catalyses all-trans-neurosporene = beta-zeacarotene. It carries out the reaction beta-zeacarotene = 7,8-dihydro-beta-carotene. It participates in carotenoid biosynthesis; beta-carotene biosynthesis. The protein operates within carotenoid biosynthesis; beta-zeacarotene biosynthesis. Functionally, catalyzes the double cyclization reaction which converts lycopene to beta-carotene. Catalyzes the double cyclization reaction which converts neurosporene to 7,8-dihydro-beta-carotene. The protein is Lycopene beta cyclase, chloroplastic/chromoplastic of Capsicum annuum (Capsicum pepper).